A 193-amino-acid chain; its full sequence is Acyl carrier protein phosphodiesterase (193 aa).

This sequence belongs to the AcpH family.

The catalysed reaction is holo-[ACP] + H2O = apo-[ACP] + (R)-4'-phosphopantetheine + H(+). Converts holo-ACP to apo-ACP by hydrolytic cleavage of the phosphopantetheine prosthetic group from ACP. The chain is Acyl carrier protein phosphodiesterase from Salmonella choleraesuis (strain SC-B67).